Consider the following 429-residue polypeptide: Probable exoglucanase GH6D (429 aa).

The first 17 residues, 1 to 17 (MRAVYAILAGLLATGSA), serve as a signal peptide directing secretion. Trp-75 and Ser-77 together coordinate substrate. Active-site proton donor residues include Asp-115 and Asp-162. Residues Asn-206 and Trp-209 each coordinate substrate. An N-linked (GlcNAc...) asparagine glycan is attached at Asn-237. Residues Asn-240, Trp-300, Lys-328, and Glu-332 each coordinate substrate. Residues 240–261 (NYNPYSTNNPPPYTAGSPSADE) form a disordered region. A disordered region spans residues 362 to 390 (PEIRADGGGGGSPAPGPSSTAVAPSPSAT). Low complexity predominate over residues 378–390 (PSSTAVAPSPSAT). The CBM1 domain maps to 394 to 429 (NCAARWAQCGGQGWTGPTCCAQGTCQASNQWYSQCL).

Belongs to the glycosyl hydrolase 6 (cellulase B) family.

The protein localises to the secreted. Probable exoglucanase that may play an important function in biomass degradation by catalyzing the hydrolysis of cellulose. In Podospora anserina (strain S / ATCC MYA-4624 / DSM 980 / FGSC 10383) (Pleurage anserina), this protein is Probable exoglucanase GH6D.